Here is a 328-residue protein sequence, read N- to C-terminus: dITP/XTP pyrophosphatase (328 aa).

The unknown stretch occupies residues 1-129; the sequence is MSEKIYEYKD…ATSEQGFGDI (129 aa). The segment at 130–324 is NTP pyrophosphatase; sequence ILIATRNEGK…KLMEVFPAWQ (195 aa). 134–139 is a binding site for substrate; sequence TRNEGK. The active-site Proton acceptor is the aspartate 196. Aspartate 196 is a binding site for Mg(2+). Substrate-binding positions include serine 197, 280–283, lysine 303, and 308–309; these read FGYD and HR.

It belongs to the HAM1 NTPase family. As to quaternary structure, homodimer. It depends on Mg(2+) as a cofactor.

The catalysed reaction is XTP + H2O = XMP + diphosphate + H(+). It carries out the reaction dITP + H2O = dIMP + diphosphate + H(+). The enzyme catalyses ITP + H2O = IMP + diphosphate + H(+). Functionally, pyrophosphatase that catalyzes the hydrolysis of nucleoside triphosphates to their monophosphate derivatives, with a high preference for the non-canonical purine nucleotides XTP (xanthosine triphosphate), dITP (deoxyinosine triphosphate) and ITP. Seems to function as a house-cleaning enzyme that removes non-canonical purine nucleotides from the nucleotide pool, thus preventing their incorporation into DNA/RNA and avoiding chromosomal lesions. The polypeptide is dITP/XTP pyrophosphatase (Streptococcus pyogenes serotype M3 (strain ATCC BAA-595 / MGAS315)).